A 549-amino-acid polypeptide reads, in one-letter code: Biotin-dependent acetyl-/propionyl-coenzyme A carboxylase beta5 subunit (549 aa).

The 257-residue stretch at 25 to 281 (TAGKLAELHK…NNFTDAPRYS (257 aa)) folds into the CoA carboxyltransferase N-terminal domain. One can recognise a CoA carboxyltransferase C-terminal domain in the interval 295–542 (AKDLELDTLI…ERKIAHLPPK (248 aa)).

Belongs to the AccD/PCCB family. In terms of assembly, the biotin-dependent acyl-CoA carboxylase complex is composed of AccA3, which contains the biotin carboxylase (BC) and biotin carboxyl carrier protein (BCCP) domains, and AccD5, which contains the carboxyl transferase (CT) domain.

It catalyses the reaction N(6)-carboxybiotinyl-L-lysyl-[protein] + acetyl-CoA = N(6)-biotinyl-L-lysyl-[protein] + malonyl-CoA. The enzyme catalyses N(6)-carboxybiotinyl-L-lysyl-[protein] + propanoyl-CoA = methylmalonyl-CoA + N(6)-biotinyl-L-lysyl-[protein]. Its pathway is lipid metabolism; mycolic acid biosynthesis. Functionally, component of a biotin-dependent acyl-CoA carboxylase complex. This subunit transfers the CO2 from carboxybiotin to the CoA ester substrate. When associated with the alpha3 subunit AccA3, is involved in the carboxylation of acetyl-CoA and propionyl-CoA. This chain is Biotin-dependent acetyl-/propionyl-coenzyme A carboxylase beta5 subunit (accD5), found in Mycobacterium leprae (strain TN).